A 262-amino-acid chain; its full sequence is Trypsin eta (262 aa).

The first 22 residues, 1–22 (MNKVILRILAVLFLLGIYAVSA), serve as a signal peptide directing secretion. A propeptide spans 23-27 (QSDGR) (activation peptide). The region spanning 28–259 (IVGGADTSSY…YKDWIAKQRT (232 aa)) is the Peptidase S1 domain. The cysteines at positions 59 and 75 are disulfide-linked. Active-site charge relay system residues include H74 and D120. 2 disulfide bridges follow: C185-C200 and C211-C235. The active-site Charge relay system is S215.

This sequence belongs to the peptidase S1 family.

It localises to the secreted. The protein localises to the extracellular space. It carries out the reaction Preferential cleavage: Arg-|-Xaa, Lys-|-Xaa.. The chain is Trypsin eta (etaTry) from Drosophila melanogaster (Fruit fly).